Reading from the N-terminus, the 333-residue chain is Phosphate acyltransferase (333 aa).

Belongs to the PlsX family. In terms of assembly, homodimer. Probably interacts with PlsY.

The protein localises to the cytoplasm. The catalysed reaction is a fatty acyl-[ACP] + phosphate = an acyl phosphate + holo-[ACP]. It participates in lipid metabolism; phospholipid metabolism. Catalyzes the reversible formation of acyl-phosphate (acyl-PO(4)) from acyl-[acyl-carrier-protein] (acyl-ACP). This enzyme utilizes acyl-ACP as fatty acyl donor, but not acyl-CoA. The polypeptide is Phosphate acyltransferase (Bacillus subtilis (strain 168)).